The sequence spans 196 residues: MIPVVIEQTSRGERSYDIYSRLLKDRIIMLTGPVEDSMANSVIAQLLFLDAQDSTKDIYLYVNTPGGSVSAGLAIVDTMNFIKADVQTIVMGMAASMGTVIASSGAKGKRFMLPNAEYMIHQPMGGTGGGTQQTDMAIAAEHLLKTRNTLEKILAENSGQSMEKVHADAERDNWMSAQETLEYGFIDEIMANNSLN.

Ser-96 functions as the Nucleophile in the catalytic mechanism. His-121 is an active-site residue.

The protein belongs to the peptidase S14 family. In terms of assembly, fourteen ClpP subunits assemble into 2 heptameric rings which stack back to back to give a disk-like structure with a central cavity, resembling the structure of eukaryotic proteasomes.

The protein resides in the cytoplasm. The catalysed reaction is Hydrolysis of proteins to small peptides in the presence of ATP and magnesium. alpha-casein is the usual test substrate. In the absence of ATP, only oligopeptides shorter than five residues are hydrolyzed (such as succinyl-Leu-Tyr-|-NHMec, and Leu-Tyr-Leu-|-Tyr-Trp, in which cleavage of the -Tyr-|-Leu- and -Tyr-|-Trp bonds also occurs).. Functionally, cleaves peptides in various proteins in a process that requires ATP hydrolysis. Has a chymotrypsin-like activity. Plays a major role in the degradation of misfolded proteins. The chain is ATP-dependent Clp protease proteolytic subunit from Streptococcus pneumoniae (strain 70585).